The following is a 351-amino-acid chain: L-threonine 3-dehydrogenase (351 aa).

A Zn(2+)-binding site is contributed by cysteine 39. Residues threonine 41 and histidine 44 each act as charge relay system in the active site. Residues histidine 64, glutamate 65, cysteine 94, cysteine 97, cysteine 100, and cysteine 108 each contribute to the Zn(2+) site. NAD(+) contacts are provided by residues isoleucine 176, aspartate 196, arginine 201, leucine 271–isoleucine 273, and isoleucine 295–tyrosine 296.

Belongs to the zinc-containing alcohol dehydrogenase family. As to quaternary structure, homotetramer. Zn(2+) serves as cofactor.

Its subcellular location is the cytoplasm. The enzyme catalyses L-threonine + NAD(+) = (2S)-2-amino-3-oxobutanoate + NADH + H(+). It participates in amino-acid degradation; L-threonine degradation via oxydo-reductase pathway; glycine from L-threonine: step 1/2. Catalyzes the NAD(+)-dependent oxidation of L-threonine to 2-amino-3-ketobutyrate. The protein is L-threonine 3-dehydrogenase of Francisella tularensis subsp. tularensis (strain SCHU S4 / Schu 4).